Reading from the N-terminus, the 776-residue chain is Reticulon-1 (776 aa).

Disordered regions lie at residues 1–103, 136–168, 204–244, and 285–580; these read MAAP…GEGS, ISESPEELGTPGSSLPDVPGIESRGLFSSDSGI, EVKH…EPAP, and LTEI…APPP. The segment covering 204–240 has biased composition (basic and acidic residues); it reads EVKHQEQNHPELEDKDLDFKNKDTDISIKPEGVREPD. A Phosphoserine modification is found at S327. The span at 328–341 shows a compositional bias: low complexity; sequence PGSITPPSSGTEPS. Phosphoserine occurs at positions 350, 352, and 487. Basic and acidic residues predominate over residues 497–511; it reads AIREETGVRAEERAP. In terms of domain architecture, Reticulon spans 589 to 776; it reads AIDLLYWRDI…KIPGAKRHAE (188 aa). A run of 2 helical transmembrane segments spans residues 603–623 and 705–725; these read IVFGSFLLLLFSLTQFSVVSV and FAVLMWLLTYVGALFNGLTLL.

As to quaternary structure, interacts with NDRG1. Interacts with BACE1. Interacts with TMEM33. In terms of processing, phosphorylated.

Its subcellular location is the endoplasmic reticulum membrane. The protein localises to the golgi apparatus membrane. Inhibits amyloid precursor protein processing, probably by blocking BACE1 activity. In Pan troglodytes (Chimpanzee), this protein is Reticulon-1 (RTN1).